The primary structure comprises 295 residues: MPSSTSEDITACTFIGGGVMARCMIDGLLDTYNNSVEIRVTARRSAHVGELATRYPTLVVSQGNISPILWDEPWHKLGKTPAAHVVLICTQPWATSDVCQDIRYVYSNYGFDPEPTFVTMCPGITTAQLEGWLPKGASVVRTMPNTPVAVRQGATALFANKVVTAQQASAVADIFRAVSPQISFIKQEDGIDIAASISGSSPAYVFKLLAILVEAGVSHGLAPDVAGALVKQSCLGAAMQALQDKRSLQSLIADVCVPGGSTEKAMQRLDEGEFSAVVAAAVEKSLDANRAMGKE.

The protein belongs to the pyrroline-5-carboxylate reductase family.

It functions in the pathway secondary metabolite biosynthesis. In terms of biological role, delta-1-pyrroline-5-carboxylate reductase; part of the gene cluster that mediates the biosynthesis of the cyclic tetrapeptide apicidin F (APF). The non-ribosomal peptide synthetase apf1 incorporates four different amino acids to produce apicidin F: L-phenylalanine, D-pipecolic acid (D-pip), N-methoxy-L-tryptophan and L-2-aminooctanedioic acid. L-Phenylalanine is the only proteinogenic amino acid directly used by apf1. The 3 other apf1 substrates are non-proteinogenic and have to be modified by other enzymes of the cluster. Lysine is converted to delta-1-pyrroline-5-carboxylate (P5C) which is reduced to L-pipecolic acid (L-pip) by apf3. L-pip is epimerized to D-pip, probably by apf1 activity, prior to incorporation. L-Tryptophan is N-oxidyzed by one of the cytochrome P450 monooxygenases (apf7 or apf8), and further methylated at the hydroxy group by the O-methyltransferase apf6 to yield N-methoxy-L-tryptophan. The synthesis of the fourth apf1 substrate is more complex. The fatty acid synthase apf5 is involved in the synthesis of the octanoic acid backbone of L-2-aminooctanedioic acid by fixing one acetyl-CoA unit and three malonyl-CoA units. Then one of the cytochrome P450 monooxygenases (apf7 or apf8) may oxidize this backbone to 2-oxooctanoic acid. The aminotransferase apf4 is predicted to catalyze the exchange of the keto group with an amino group. The next step would be the oxidation of 2-aminooctanoic acid by one of the cytochrome P450 monooxygenases (apf7 or apf8). The last step is the oxidation of 2-amino-8-hydroxyoctanoic acid to 2-aminooctanedioic acid is catalyzed by the FAD-dependent monooxygenase apf9. The polypeptide is Delta-1-pyrroline-5-carboxylate reductase apf3 (Gibberella fujikuroi (strain CBS 195.34 / IMI 58289 / NRRL A-6831) (Bakanae and foot rot disease fungus)).